A 329-amino-acid chain; its full sequence is tRNA dimethylallyltransferase (329 aa).

24 to 31 is a binding site for ATP; that stretch reads GSTGIGKT. Position 26–31 (26–31) interacts with substrate; the sequence is TGIGKT. The segment at 49–52 is interaction with substrate tRNA; the sequence is DSMQ.

Belongs to the IPP transferase family. In terms of assembly, monomer. Mg(2+) is required as a cofactor.

The enzyme catalyses adenosine(37) in tRNA + dimethylallyl diphosphate = N(6)-dimethylallyladenosine(37) in tRNA + diphosphate. Catalyzes the transfer of a dimethylallyl group onto the adenine at position 37 in tRNAs that read codons beginning with uridine, leading to the formation of N6-(dimethylallyl)adenosine (i(6)A). The sequence is that of tRNA dimethylallyltransferase from Methylacidiphilum infernorum (isolate V4) (Methylokorus infernorum (strain V4)).